Consider the following 222-residue polypeptide: Glutathione S-transferase alpha-2 (222 aa).

The GST N-terminal domain occupies G3–G83. K4 is modified (N6-succinyllysine). Residues Y9, K45, Q54–V55, and Q67–T68 each bind glutathione. Residues D85–M208 form the GST C-terminal domain.

Belongs to the GST superfamily. Alpha family. In terms of assembly, homodimer or heterodimer of GSTA1 and GSTA2.

The protein localises to the cytoplasm. The enzyme catalyses RX + glutathione = an S-substituted glutathione + a halide anion + H(+). Its function is as follows. Catalyzes the conjugation of glutathione to a large variety of electrophilic compounds. In Rattus norvegicus (Rat), this protein is Glutathione S-transferase alpha-2 (Gsta2).